A 252-amino-acid polypeptide reads, in one-letter code: MSGHNKWANIKHRKAAQDAKRSKIFTKLIREIIVAAREGGGNPDTNPRLRAVLEKAREANMPKDTVERSIKKGTGELEGEKYEEIIYEAYAPGGVALYILALTDNKNRTAQELRHILSKNGGSLAESGSVAWIFERKGAIEISASKISDMDEFTLLAIDAGAEDIEEGDPVIVYVAPESLTAVKEALAKNGFEGESKITYKPKNTVKVTGSDAEKVLKLIDALEDNDDVQEVFGNFDIDDAELEAIMAKLEG.

The protein belongs to the TACO1 family.

The protein resides in the cytoplasm. The polypeptide is Probable transcriptional regulatory protein Fnod_1106 (Fervidobacterium nodosum (strain ATCC 35602 / DSM 5306 / Rt17-B1)).